The primary structure comprises 100 residues: NADH-quinone oxidoreductase subunit K (100 aa).

The next 3 helical transmembrane spans lie at Ile2 to Val22, Leu28 to Val48, and Val60 to Leu80.

It belongs to the complex I subunit 4L family. In terms of assembly, NDH-1 is composed of 13 different subunits. Subunits NuoA, H, J, K, L, M, N constitute the membrane sector of the complex.

The protein resides in the cell inner membrane. It catalyses the reaction a quinone + NADH + 5 H(+)(in) = a quinol + NAD(+) + 4 H(+)(out). Its function is as follows. NDH-1 shuttles electrons from NADH, via FMN and iron-sulfur (Fe-S) centers, to quinones in the respiratory chain. The immediate electron acceptor for the enzyme in this species is believed to be ubiquinone. Couples the redox reaction to proton translocation (for every two electrons transferred, four hydrogen ions are translocated across the cytoplasmic membrane), and thus conserves the redox energy in a proton gradient. The chain is NADH-quinone oxidoreductase subunit K from Erwinia tasmaniensis (strain DSM 17950 / CFBP 7177 / CIP 109463 / NCPPB 4357 / Et1/99).